The sequence spans 605 residues: MQIKKINNKQKRIRNFSIIAHVDHGKSTLADRILEITNTVEKRLMQKQFLDSMDLEKERGITIKLNAVQIIFNDKKGDEYIMHLIDTPGHVDFNYEVSRALAACEGVILVIDATQGIQAQTLTNFYLAIENNLLIIPVINKIDLPNADVNKVRREIKDTLGIEPENTILVSGKTGVGVTEILEKVVSNIPSPRGDINEPFQSLVFDSFFDPYKGVVSLIRVFSGKIQKGDQIRFMSNNEVYEVSEVGVYSPFQTPKPFLFVGEVGYLSASIKNIDKVRVGDTITNHKNPTKQRLPGYRKIQPVVFCGLYPITCSKYETLKSALEKLKLNDASLTFEPETSVALGLGFRIGFLGLLHMEIIQERISREFDIEAITTAPSVIYHVYTKKGTKILVDNPSKWPNTQIIERVEEPFIKATIICPQIYIGTVMTLSQSKRGQLKDISYLDKNIAMIIYFFPLSEIMYNYFDKLKSVTKGYASFEYEIDSYRSSSLQKMDILLNGEVIDALSIIIHKDFAYSRGKVICSKLIECIPKQMFEVPIQVAIGKRVIVRENIKSMRKDVISKCYGGDVSRKKKLLSKQKEGKKKMKNLGKVKLPQKAFLAILSTE.

The region spanning Lys11–Arg193 is the tr-type G domain. Residues Asp23–Thr28 and Asn140–Asp143 each bind GTP.

This sequence belongs to the TRAFAC class translation factor GTPase superfamily. Classic translation factor GTPase family. LepA subfamily.

Its subcellular location is the cell membrane. It catalyses the reaction GTP + H2O = GDP + phosphate + H(+). Functionally, required for accurate and efficient protein synthesis under certain stress conditions. May act as a fidelity factor of the translation reaction, by catalyzing a one-codon backward translocation of tRNAs on improperly translocated ribosomes. Back-translocation proceeds from a post-translocation (POST) complex to a pre-translocation (PRE) complex, thus giving elongation factor G a second chance to translocate the tRNAs correctly. Binds to ribosomes in a GTP-dependent manner. This Phytoplasma mali (strain AT) protein is Elongation factor 4.